A 404-amino-acid polypeptide reads, in one-letter code: Glucose-1-phosphate adenylyltransferase (404 aa).

Alpha-D-glucose 1-phosphate-binding positions include Y99, G164, 179 to 180, and S197; that span reads EK.

The protein belongs to the bacterial/plant glucose-1-phosphate adenylyltransferase family.

The enzyme catalyses alpha-D-glucose 1-phosphate + ATP + H(+) = ADP-alpha-D-glucose + diphosphate. It participates in glycan biosynthesis; glycogen biosynthesis. Involved in the biosynthesis of ADP-glucose, a building block, required in the biosynthesis of maltose-1-phosphate (M1P) and in the elongation reactions to produce linear alpha-1,4-glucans. Catalyzes the reaction between ATP and alpha-D-glucose 1-phosphate (G1P) to produce pyrophosphate and ADP-Glc. The polypeptide is Glucose-1-phosphate adenylyltransferase (Mycolicibacterium vanbaalenii (strain DSM 7251 / JCM 13017 / BCRC 16820 / KCTC 9966 / NRRL B-24157 / PYR-1) (Mycobacterium vanbaalenii)).